A 642-amino-acid polypeptide reads, in one-letter code: Cylicin-1 (642 aa).

2 disordered regions span residues 167 to 203 and 284 to 607; these read NGEP…NLEY and NCSQ…CEPF. Positions 191 to 203 are enriched in polar residues; the sequence is KTSNSTSETNLEY. 8 repeat units span residues 294–313, 314–344, 345–391, 392–432, 433–464, 465–500, 501–526, and 527–543. The segment covering 298–316 has biased composition (basic and acidic residues); that stretch reads GKKERDSDIDSGGSKDAKK. Residues 317 to 330 are compositionally biased toward basic residues; that stretch reads EGKKKGKRESRKKR. Residues 353 to 364 are compositionally biased toward basic and acidic residues; sequence KKNEIKKKKDTD. Residues 388–404 are compositionally biased toward low complexity; the sequence is KKSTGSTGSESVDSKST. The segment covering 405–416 has biased composition (basic residues); the sequence is NKVKKQVKKGVM. Basic and acidic residues predominate over residues 428 to 440; that stretch reads ASSKKSKKDEKKE. The segment covering 454 to 463 has biased composition (acidic residues); it reads STDADSESEG. The span at 465 to 488 shows a compositional bias: basic and acidic residues; it reads STGKKNEKKDKKITKKGEKKDAKK. Over residues 513–523 the composition is skewed to low complexity; it reads SFSDSTSDSYS. The 8 X approximate tandem repeats stretch occupies residues 527 to 543; it reads RRKNVRRSDSESEDSSG.

Interacts with proteins of spermatozoa head including ACTL7A, CCIN, FAM209 and SPACA1; the interactions may be necessary for proper acrosome attachment to the nuclear envelope. Testis.

The protein resides in the cytoplasm. It localises to the cytoskeleton. Its subcellular location is the perinuclear theca. The protein localises to the calyx. Its function is as follows. Plays a role in the establishment of normal sperm morphology during spermatogenesis and is required for acrosome attachment to the nuclear envelope. The chain is Cylicin-1 from Mus musculus (Mouse).